The chain runs to 1216 residues: 1-phosphatidylinositol 4,5-bisphosphate phosphodiesterase beta-1 (1216 aa).

The S-palmitoyl cysteine moiety is linked to residue Cys-17. Ser-236 carries the phosphoserine modification. One can recognise a PI-PLC X-box domain in the interval 316-467; the sequence is EDMSQPLSHY…LMYKILVKNK (152 aa). Residues His-331 and His-378 contribute to the active site. The residue at position 417 (Ser-417) is a Phosphoserine. The segment at 469–534 is disordered; that stretch reads KSHKSSEGSG…MDEGTAGSEA (66 aa). The span at 472-483 shows a compositional bias: basic and acidic residues; the sequence is KSSEGSGKKKLS. The segment covering 491–501 has biased composition (low complexity); the sequence is SDSSSVFEPSS. Over residues 507–518 the composition is skewed to acidic residues; that stretch reads ADTESDDDDDDD. A Phosphothreonine modification is found at Thr-509. Phosphoserine occurs at positions 511 and 582. A PI-PLC Y-box domain is found at 540 to 656; the sequence is MSNLVNYIQP…GYRLKPEFMR (117 aa). The 131-residue stretch at 656–786 folds into the C2 domain; it reads RRPDKHFDPF…RNERNQPLTL (131 aa). Disordered stretches follow at residues 834–891, 967–989, 1072–1095, and 1173–1216; these read DEEE…VKAP, EKSA…GSSA, MDKK…EEEK, and ISED…DTPL. Residues 846-868 are compositionally biased toward polar residues; the sequence is ETSSEAPSETRTTPAENGVNHTA. Ser-887 is modified (phosphoserine; by PKC). Residues 967–979 are compositionally biased toward basic and acidic residues; that stretch reads EKSAKKDSKKKSE. Ser-978 and Ser-987 each carry phosphoserine. The segment covering 1075-1095 has biased composition (basic and acidic residues); sequence KRQEKITEAKSKDKSQMEEEK. Phosphoserine is present on residues Ser-1197, Ser-1199, and Ser-1200. A compositionally biased stretch (basic and acidic residues) spans 1205 to 1216; it reads RENPGREFDTPL.

As to quaternary structure, interacts with DGKQ. Ca(2+) serves as cofactor. Palmitoylated. Palmitoylation at Cys-17 by ZDHHC21 regulates the signaling activity of PLCB1 and the function of the endothelial barrier. Palmitoylation by ZDHHC21 is stimulated by inflammation.

It localises to the nucleus membrane. It is found in the cytoplasm. The enzyme catalyses a 1,2-diacyl-sn-glycero-3-phospho-(1D-myo-inositol-4,5-bisphosphate) + H2O = 1D-myo-inositol 1,4,5-trisphosphate + a 1,2-diacyl-sn-glycerol + H(+). It carries out the reaction a 1,2-diacyl-sn-glycero-3-phospho-(1D-myo-inositol) + H2O = 1D-myo-inositol 1-phosphate + a 1,2-diacyl-sn-glycerol + H(+). Its function is as follows. Catalyzes the hydrolysis of 1-phosphatidylinositol 4,5-bisphosphate into diacylglycerol (DAG) and inositol 1,4,5-trisphosphate (IP3) and mediates intracellular signaling downstream of G protein-coupled receptors. Regulates the function of the endothelial barrier. The polypeptide is 1-phosphatidylinositol 4,5-bisphosphate phosphodiesterase beta-1 (Mus musculus (Mouse)).